The primary structure comprises 158 residues: Transcription elongation factor GreA (158 aa).

It belongs to the GreA/GreB family.

Functionally, necessary for efficient RNA polymerase transcription elongation past template-encoded arresting sites. The arresting sites in DNA have the property of trapping a certain fraction of elongating RNA polymerases that pass through, resulting in locked ternary complexes. Cleavage of the nascent transcript by cleavage factors such as GreA or GreB allows the resumption of elongation from the new 3'terminus. GreA releases sequences of 2 to 3 nucleotides. This Rhizobium johnstonii (strain DSM 114642 / LMG 32736 / 3841) (Rhizobium leguminosarum bv. viciae) protein is Transcription elongation factor GreA.